The following is a 351-amino-acid chain: Anthranilate phosphoribosyltransferase (351 aa).

5-phospho-alpha-D-ribose 1-diphosphate is bound by residues G80, 83–84, T88, 90–93, 108–116, and S120; these read GD, NIST, and KHGNRSVTS. G80 provides a ligand contact to anthranilate. S92 provides a ligand contact to Mg(2+). N111 serves as a coordination point for anthranilate. R166 provides a ligand contact to anthranilate. 2 residues coordinate Mg(2+): D229 and E230.

The protein belongs to the anthranilate phosphoribosyltransferase family. As to quaternary structure, homodimer. The cofactor is Mg(2+).

It catalyses the reaction N-(5-phospho-beta-D-ribosyl)anthranilate + diphosphate = 5-phospho-alpha-D-ribose 1-diphosphate + anthranilate. It participates in amino-acid biosynthesis; L-tryptophan biosynthesis; L-tryptophan from chorismate: step 2/5. Functionally, catalyzes the transfer of the phosphoribosyl group of 5-phosphorylribose-1-pyrophosphate (PRPP) to anthranilate to yield N-(5'-phosphoribosyl)-anthranilate (PRA). In Chlorobium chlorochromatii (strain CaD3), this protein is Anthranilate phosphoribosyltransferase.